The sequence spans 101 residues: Glutaredoxin-1 (101 aa).

One can recognise a Glutaredoxin domain in the interval 5 to 101 (KDRVEKLIQT…GSLSKMIAAL (97 aa)). C25 and C28 are oxidised to a cystine.

Belongs to the glutaredoxin family.

It is found in the cytoplasm. It localises to the cytosol. In terms of biological role, multifunctional enzyme with glutathione-dependent oxidoreductase, glutathione peroxidase and glutathione S-transferase (GST) activity. The disulfide bond functions as an electron carrier in the glutathione-dependent synthesis of deoxyribonucleotides by the enzyme ribonucleotide reductase. In addition, it is also involved in reducing cytosolic protein- and non-protein-disulfides in a coupled system with glutathione reductase. May play a role in protection against oxidative stress caused by superoxide in vivo by regulating the redox state of the protein sulfhydryl groups. This chain is Glutaredoxin-1, found in Rhizophagus irregularis (strain DAOM 181602 / DAOM 197198 / MUCL 43194) (Arbuscular mycorrhizal fungus).